The primary structure comprises 375 residues: Ketohexokinase (375 aa).

Residue Asp-319 coordinates beta-D-fructose.

This sequence belongs to the carbohydrate kinase PfkB family. As to quaternary structure, homodimer.

It catalyses the reaction beta-D-fructose + ATP = beta-D-fructose 1-phosphate + ADP + H(+). It participates in carbohydrate metabolism; fructose metabolism. With respect to regulation, activated in the presence of 0.5 M KCl. 85% activity at 3.5 M KCl. 60% activity without KCl. Its function is as follows. Catalyzes the ATP-dependent phosphorylation of the ketose sugar fructose to fructose-1-phosphate. Does not produce fructose-6-phosphate. The sugars D-glucose, D-galactose, L-rhamnose, D-xylose, L-arabinose and D-ribose are not substrates of this enzyme. This is Ketohexokinase from Haloferax volcanii (strain ATCC 29605 / DSM 3757 / JCM 8879 / NBRC 14742 / NCIMB 2012 / VKM B-1768 / DS2) (Halobacterium volcanii).